Reading from the N-terminus, the 303-residue chain is Sulfate adenylyltransferase subunit 2 (303 aa).

Residues 282-303 (SGRLIDHDESGSMEKKKREGYF) are disordered.

This sequence belongs to the PAPS reductase family. CysD subfamily. Heterodimer composed of CysD, the smaller subunit, and CysN.

The enzyme catalyses sulfate + ATP + H(+) = adenosine 5'-phosphosulfate + diphosphate. Its pathway is sulfur metabolism; hydrogen sulfide biosynthesis; sulfite from sulfate: step 1/3. Functionally, with CysN forms the ATP sulfurylase (ATPS) that catalyzes the adenylation of sulfate producing adenosine 5'-phosphosulfate (APS) and diphosphate, the first enzymatic step in sulfur assimilation pathway. APS synthesis involves the formation of a high-energy phosphoric-sulfuric acid anhydride bond driven by GTP hydrolysis by CysN coupled to ATP hydrolysis by CysD. The polypeptide is Sulfate adenylyltransferase subunit 2 (Maricaulis maris (strain MCS10) (Caulobacter maris)).